The chain runs to 1222 residues: ATP-dependent helicase/nuclease subunit A (1222 aa).

Residues 39–495 (QKRTAQQIEA…ILLKENFRSQ (457 aa)) form the UvrD-like helicase ATP-binding domain. An ATP-binding site is contributed by 60-67 (ASAGSGKT). One can recognise a UvrD-like helicase C-terminal domain in the interval 524–810 (QLIAGSHAQT…NLMTIHKSKG (287 aa)).

Belongs to the helicase family. AddA subfamily. As to quaternary structure, heterodimer of AddA and AddB/RexB. It depends on Mg(2+) as a cofactor.

The enzyme catalyses Couples ATP hydrolysis with the unwinding of duplex DNA by translocating in the 3'-5' direction.. The catalysed reaction is ATP + H2O = ADP + phosphate + H(+). The heterodimer acts as both an ATP-dependent DNA helicase and an ATP-dependent, dual-direction single-stranded exonuclease. Recognizes the chi site generating a DNA molecule suitable for the initiation of homologous recombination. The AddA nuclease domain is required for chi fragment generation; this subunit has the helicase and 3' -&gt; 5' nuclease activities. The sequence is that of ATP-dependent helicase/nuclease subunit A from Streptococcus pyogenes serotype M49 (strain NZ131).